The primary structure comprises 54 residues: Ductus ejaculatorius peptide 99B (54 aa).

An N-terminal signal peptide occupies residues 1-21 (MKTPLFLLLVVLASLLGLALS). At Gln22 the chain carries Pyrrolidone carboxylic acid. Asn25 is a glycosylation site (N-linked (GlcNAc...) asparagine). The cysteines at positions 40 and 52 are disulfide-linked. Positions 53–54 (RK) are excised as a propeptide.

The protein to paragonial peptide B. As to expression, ductus ejaculatorius.

Its subcellular location is the secreted. Functionally, induces post-mating responses; increased oviposition and reduced receptivity. The sequence is that of Ductus ejaculatorius peptide 99B (Dup99B) from Drosophila melanogaster (Fruit fly).